A 563-amino-acid chain; its full sequence is Arginine--tRNA ligase (563 aa).

A 'HIGH' region motif is present at residues Pro121 to His131.

This sequence belongs to the class-I aminoacyl-tRNA synthetase family. In terms of assembly, monomer.

The protein resides in the cytoplasm. The catalysed reaction is tRNA(Arg) + L-arginine + ATP = L-arginyl-tRNA(Arg) + AMP + diphosphate. The sequence is that of Arginine--tRNA ligase from Streptococcus agalactiae serotype III (strain NEM316).